Reading from the N-terminus, the 184-residue chain is 2-C-methyl-D-erythritol 2,4-cyclodiphosphate synthase (184 aa).

A divalent metal cation is bound by residues Asp-17 and His-19. Residues 17–19 and 47–48 contribute to the 4-CDP-2-C-methyl-D-erythritol 2-phosphate site; these read DVH and HS. His-55 provides a ligand contact to a divalent metal cation. 4-CDP-2-C-methyl-D-erythritol 2-phosphate is bound by residues 74 to 78, Phe-152, and Arg-155; that span reads FPNTD.

It belongs to the IspF family. Homotrimer. A divalent metal cation is required as a cofactor.

It carries out the reaction 4-CDP-2-C-methyl-D-erythritol 2-phosphate = 2-C-methyl-D-erythritol 2,4-cyclic diphosphate + CMP. The protein operates within isoprenoid biosynthesis; isopentenyl diphosphate biosynthesis via DXP pathway; isopentenyl diphosphate from 1-deoxy-D-xylulose 5-phosphate: step 4/6. Its function is as follows. Involved in the biosynthesis of isopentenyl diphosphate (IPP) and dimethylallyl diphosphate (DMAPP), two major building blocks of isoprenoid compounds. Catalyzes the conversion of 4-diphosphocytidyl-2-C-methyl-D-erythritol 2-phosphate (CDP-ME2P) to 2-C-methyl-D-erythritol 2,4-cyclodiphosphate (ME-CPP) with a corresponding release of cytidine 5-monophosphate (CMP). The chain is 2-C-methyl-D-erythritol 2,4-cyclodiphosphate synthase from Anaplasma marginale (strain St. Maries).